The sequence spans 204 residues: Holliday junction branch migration complex subunit RuvA (204 aa).

The domain I stretch occupies residues 1–64; it reads MIGKLKGTLE…EEAIRLFGFA (64 aa). The domain II stretch occupies residues 65–143; that stretch reads TRAEQEWFCM…PFEQAVKTVS (79 aa). The interval 144–154 is flexible linker; that stretch reads VPQREITHQPA. Residues 154-204 form a domain III region; sequence AHDALSALMKLGFEREQAARALALAMNALEGEAVSSALLIRHSLKLLSSPT.

Belongs to the RuvA family. As to quaternary structure, homotetramer. Forms an RuvA(8)-RuvB(12)-Holliday junction (HJ) complex. HJ DNA is sandwiched between 2 RuvA tetramers; dsDNA enters through RuvA and exits via RuvB. An RuvB hexamer assembles on each DNA strand where it exits the tetramer. Each RuvB hexamer is contacted by two RuvA subunits (via domain III) on 2 adjacent RuvB subunits; this complex drives branch migration. In the full resolvosome a probable DNA-RuvA(4)-RuvB(12)-RuvC(2) complex forms which resolves the HJ.

The protein resides in the cytoplasm. Functionally, the RuvA-RuvB-RuvC complex processes Holliday junction (HJ) DNA during genetic recombination and DNA repair, while the RuvA-RuvB complex plays an important role in the rescue of blocked DNA replication forks via replication fork reversal (RFR). RuvA specifically binds to HJ cruciform DNA, conferring on it an open structure. The RuvB hexamer acts as an ATP-dependent pump, pulling dsDNA into and through the RuvAB complex. HJ branch migration allows RuvC to scan DNA until it finds its consensus sequence, where it cleaves and resolves the cruciform DNA. The protein is Holliday junction branch migration complex subunit RuvA of Bartonella tribocorum (strain CIP 105476 / IBS 506).